A 767-amino-acid polypeptide reads, in one-letter code: V-set and immunoglobulin domain-containing protein 10-like 2 (767 aa).

The N-terminal stretch at 1–28 (MVGQRAQHSPVSLLLLIHLCLLHLRASG) is a signal peptide. Ig-like domains are found at residues 34–140 (PEAP…SHLT), 150–234 (PQVR…AFLD), and 242–324 (PVIT…TTVQ). 3 disulfide bridges follow: Cys56/Cys122, Cys169/Cys217, and Cys268/Cys308. Asn376 is a glycosylation site (N-linked (GlcNAc...) asparagine). Ig-like domains lie at 399-499 (PALA…LQLE) and 501-593 (PQLD…VLLE). Cystine bridges form between Cys435/Cys481 and Cys522/Cys577. A Fibronectin type-III domain is found at 599 to 699 (APPNVTISRL…EVKIPADPPF (101 aa)). N-linked (GlcNAc...) asparagine glycans are attached at residues Asn602 and Asn628. Residues 704 to 724 (AVLGAAGTGMVVATVASLLVF) traverse the membrane as a helical segment. The tract at residues 735–754 (PRLETPTTTPGLDPAQETTD) is disordered. Polar residues predominate over residues 739–754 (TPTTTPGLDPAQETTD).

Its subcellular location is the membrane. The protein is V-set and immunoglobulin domain-containing protein 10-like 2 of Homo sapiens (Human).